Reading from the N-terminus, the 87-residue chain is Large ribosomal subunit protein bL27 (87 aa).

Residues 1–21 (MAHKKAGGSSRNGRDSESKRL) are disordered.

It belongs to the bacterial ribosomal protein bL27 family.

The sequence is that of Large ribosomal subunit protein bL27 from Aromatoleum aromaticum (strain DSM 19018 / LMG 30748 / EbN1) (Azoarcus sp. (strain EbN1)).